Here is a 194-residue protein sequence, read N- to C-terminus: Probable WRKY transcription factor 51 (194 aa).

Residues 58 to 97 (SSETFTGESGGSGSATTLSKKESTNRGSKESDQTKETGHR) form a disordered region. Residues 76-96 (SKKESTNRGSKESDQTKETGH) show a composition bias toward basic and acidic residues. The segment at residues 104–169 (SKIDVMDDGF…YEGVHNHESL (66 aa)) is a DNA-binding region (WRKY).

Belongs to the WRKY group II-c family. Interacts with CAMBP25/VQ15.

It is found in the nucleus. Transcription factor. Interacts specifically with the W box (5'-(T)TGAC[CT]-3'), a frequently occurring elicitor-responsive cis-acting element. Involved in defense responses. May act as positive regulator of salicylic acid (SA)-mediated signaling and negative regulator of jasmonic acid (JA)-mediated signaling. This is Probable WRKY transcription factor 51 (WRKY51) from Arabidopsis thaliana (Mouse-ear cress).